The primary structure comprises 380 residues: MAPNPRKSHPLLKMVNNSLIDLPTPSNISAWWNFGSLLALCLMTQILTGLLLAMHYTADTTLAFSSVAHTCRNVQYGWLIRNMHANGASFFFICIYMHIGRGFYYGSYLHKETWNTGILLLLTLMATAFVGYVLPWGQMSFWGATVITNMFSAIPYIGQTIVEWAWGGFSVDNPTLTRFFALHFLLPFMIAGLTLIHLTFLHESGSNNPLGIVSNCDKIPFHPYYSLKDILGLTLLLLPLTTMALFSPNLLGDPENFTPANPLVTPPHIKPEWYFLFAYAILRSIPNKLGGVLALAASVLVLFLSPLLHKSKQRTMAFRPLSQLLFWTLVANLLILTWIGSQPVEHPFIIIGQLASTTYFIILLILFPITSALENKMLNF.

4 helical membrane passes run Phe-34 to Met-54, Trp-78 to Ile-99, Trp-114 to Leu-134, and Phe-179 to Thr-199. Heme b contacts are provided by His-84 and His-98. Heme b contacts are provided by His-183 and His-197. Residue His-202 coordinates a ubiquinone. 4 consecutive transmembrane segments (helical) span residues Leu-227–Ser-247, Leu-289–His-309, Leu-321–Ser-341, and Phe-348–Pro-368.

This sequence belongs to the cytochrome b family. In terms of assembly, the cytochrome bc1 complex contains 11 subunits: 3 respiratory subunits (MT-CYB, CYC1 and UQCRFS1), 2 core proteins (UQCRC1 and UQCRC2) and 6 low-molecular weight proteins (UQCRH/QCR6, UQCRB/QCR7, UQCRQ/QCR8, UQCR10/QCR9, UQCR11/QCR10 and a cleavage product of UQCRFS1). This cytochrome bc1 complex then forms a dimer. Heme b is required as a cofactor.

It localises to the mitochondrion inner membrane. Component of the ubiquinol-cytochrome c reductase complex (complex III or cytochrome b-c1 complex) that is part of the mitochondrial respiratory chain. The b-c1 complex mediates electron transfer from ubiquinol to cytochrome c. Contributes to the generation of a proton gradient across the mitochondrial membrane that is then used for ATP synthesis. This is Cytochrome b (MT-CYB) from Hydrobates pelagicus (European storm-petrel).